The following is a 213-amino-acid chain: 5-methylthioribulose-1-phosphate/5-deoxyribulose-1-phosphate aldolase (213 aa).

The active-site Proton donor/acceptor is the Glu73. Residues Glu73, His92, His94, and His155 each contribute to the Co(2+) site.

This sequence belongs to the aldolase class II family. Co(2+) is required as a cofactor.

It catalyses the reaction 5-(methylsulfanyl)-D-ribulose 1-phosphate = 2-(methylsulfanyl)acetaldehyde + dihydroxyacetone phosphate. The enzyme catalyses 5-deoxy-D-ribulose 1-phosphate = dihydroxyacetone phosphate + acetaldehyde. The protein operates within amino-acid biosynthesis; L-methionine biosynthesis via salvage pathway. Uses 5-methylthioribulose-1-phosphate to yield 2-(methylthio)acetaldehyde and dihydroxyacetone phosphate. Can also use 5-deoxyribulose 1-phosphate to yield acetaldehyde and dihydroxyacetone phosphate. Part of a bifunctional DHAP-shunt salvage pathway for SAM by-products. This chain is 5-methylthioribulose-1-phosphate/5-deoxyribulose-1-phosphate aldolase, found in Escherichia coli O45:K1 (strain S88 / ExPEC).